We begin with the raw amino-acid sequence, 377 residues long: Queuine tRNA-ribosyltransferase (377 aa).

Asp-91 acts as the Proton acceptor in catalysis. Substrate contacts are provided by residues Asp-91 to Phe-95, Asp-145, Gln-189, and Gly-216. The segment at Gly-247–Asp-253 is RNA binding. The active-site Nucleophile is the Asp-266. The RNA binding; important for wobble base 34 recognition stretch occupies residues Thr-271 to Arg-275. 4 residues coordinate Zn(2+): Cys-304, Cys-306, Cys-309, and His-335.

It belongs to the queuine tRNA-ribosyltransferase family. In terms of assembly, homodimer. Within each dimer, one monomer is responsible for RNA recognition and catalysis, while the other monomer binds to the replacement base PreQ1. Requires Zn(2+) as cofactor.

The enzyme catalyses 7-aminomethyl-7-carbaguanine + guanosine(34) in tRNA = 7-aminomethyl-7-carbaguanosine(34) in tRNA + guanine. It participates in tRNA modification; tRNA-queuosine biosynthesis. Its function is as follows. Catalyzes the base-exchange of a guanine (G) residue with the queuine precursor 7-aminomethyl-7-deazaguanine (PreQ1) at position 34 (anticodon wobble position) in tRNAs with GU(N) anticodons (tRNA-Asp, -Asn, -His and -Tyr). Catalysis occurs through a double-displacement mechanism. The nucleophile active site attacks the C1' of nucleotide 34 to detach the guanine base from the RNA, forming a covalent enzyme-RNA intermediate. The proton acceptor active site deprotonates the incoming PreQ1, allowing a nucleophilic attack on the C1' of the ribose to form the product. After dissociation, two additional enzymatic reactions on the tRNA convert PreQ1 to queuine (Q), resulting in the hypermodified nucleoside queuosine (7-(((4,5-cis-dihydroxy-2-cyclopenten-1-yl)amino)methyl)-7-deazaguanosine). This Vibrio parahaemolyticus serotype O3:K6 (strain RIMD 2210633) protein is Queuine tRNA-ribosyltransferase.